A 914-amino-acid polypeptide reads, in one-letter code: Eukaryotic translation initiation factor 3 subunit C-like protein (914 aa).

The segment at 1-44 (MSRFFTTGSDSESESSLSGEELVTKPVGGNYGKQPLLLSEDEED) is disordered. The span at 8 to 21 (GSDSESESSLSGEE) shows a compositional bias: low complexity. S9, S11, S13, S15, S16, S18, and S39 each carry phosphoserine. K99 is subject to N6-acetyllysine. Disordered stretches follow at residues 157-302 (TSYK…GGEW) and 523-543 (QLTPPEGSSKSEQDQAENEGE). A phosphoserine mark is found at S166, S178, S181, and S182. Residues 166 to 190 (SADEDAEKNEEDSEGSSDEDEDEDG) are compositionally biased toward acidic residues. Residues 199 to 216 (KKSEAPSGESRKFLKKMD) are compositionally biased toward basic and acidic residues. A compositionally biased stretch (acidic residues) spans 217-232 (DEDEDSEDSEDDEDWD). A compositionally biased stretch (basic and acidic residues) spans 261–278 (PTTDEDKKAAEKKREDKA). Positions 291-300 (EEEEEDNEGG) are enriched in acidic residues. The segment covering 523 to 532 (QLTPPEGSSK) has biased composition (polar residues). T525 carries the post-translational modification Phosphothreonine. K644 is subject to N6-acetyllysine. The region spanning 674-850 (FHLHINLELL…QTVVMHRTEP (177 aa)) is the PCI domain. The interval 886–914 (FRDQKDGYRKNEGYMRRGGYRQQQSQTAY) is disordered. The span at 887–900 (RDQKDGYRKNEGYM) shows a compositional bias: basic and acidic residues. Position 910 is a phosphoserine (S910).

It belongs to the eIF-3 subunit C family. Component of the eukaryotic translation initiation factor 3 (eIF-3) complex, which is composed of 13 subunits: EIF3A, EIF3B, EIF3C, EIF3D, EIF3E, EIF3F, EIF3G, EIF3H, EIF3I, EIF3J, EIF3K, EIF3L and EIF3M. The eIF-3 complex appears to include 3 stable modules: module A is composed of EIF3A, EIF3B, EIF3G and EIF3I; module B is composed of EIF3F, EIF3H, and EIF3M; and module C is composed of EIF3C, EIF3D, EIF3E, EIF3K and EIF3L. EIF3C of module C binds EIF3B of module A and EIF3H of module B, thereby linking the three modules. EIF3J is a labile subunit that binds to the eIF-3 complex via EIF3B. The eIF-3 complex interacts with RPS6KB1 under conditions of nutrient depletion. Mitogenic stimulation leads to binding and activation of a complex composed of MTOR and RPTOR, leading to phosphorylation and release of RPS6KB1 and binding of EIF4B to eIF-3. In terms of processing, phosphorylated. Phosphorylation is enhanced upon serum stimulation.

The protein resides in the cytoplasm. Component of the eukaryotic translation initiation factor 3 (eIF-3) complex, which is required for several steps in the initiation of protein synthesis. The eIF-3 complex associates with the 40S ribosome and facilitates the recruitment of eIF-1, eIF-1A, eIF-2:GTP:methionyl-tRNAi and eIF-5 to form the 43S pre-initiation complex (43S PIC). The eIF-3 complex stimulates mRNA recruitment to the 43S PIC and scanning of the mRNA for AUG recognition. The eIF-3 complex is also required for disassembly and recycling of post-termination ribosomal complexes and subsequently prevents premature joining of the 40S and 60S ribosomal subunits prior to initiation. The eIF-3 complex specifically targets and initiates translation of a subset of mRNAs involved in cell proliferation, including cell cycling, differentiation and apoptosis, and uses different modes of RNA stem-loop binding to exert either translational activation or repression. The chain is Eukaryotic translation initiation factor 3 subunit C-like protein (EIF3CL) from Homo sapiens (Human).